A 74-amino-acid chain; its full sequence is Large ribosomal subunit protein bL31 (74 aa).

Zn(2+)-binding residues include Cys16, Cys18, Cys37, and Cys40.

The protein belongs to the bacterial ribosomal protein bL31 family. Type A subfamily. As to quaternary structure, part of the 50S ribosomal subunit. Zn(2+) serves as cofactor.

Functionally, binds the 23S rRNA. The sequence is that of Large ribosomal subunit protein bL31 from Nitrosomonas europaea (strain ATCC 19718 / CIP 103999 / KCTC 2705 / NBRC 14298).